The sequence spans 470 residues: Glutamate--tRNA ligase (470 aa).

The 'HIGH' region signature appears at 9–19 (PSPTGFLHVGG). Positions 236 to 240 (RLSKR) match the 'KMSKS' region motif. Residue Lys239 participates in ATP binding.

Belongs to the class-I aminoacyl-tRNA synthetase family. Glutamate--tRNA ligase type 1 subfamily. Monomer.

The protein resides in the cytoplasm. The catalysed reaction is tRNA(Glu) + L-glutamate + ATP = L-glutamyl-tRNA(Glu) + AMP + diphosphate. In terms of biological role, catalyzes the attachment of glutamate to tRNA(Glu) in a two-step reaction: glutamate is first activated by ATP to form Glu-AMP and then transferred to the acceptor end of tRNA(Glu). This is Glutamate--tRNA ligase from Legionella pneumophila (strain Lens).